The following is a 936-amino-acid chain: Isoleucine--tRNA ligase (936 aa).

Positions 58-68 (PYANGNIHIGH) match the 'HIGH' region motif. Glu-560 contacts L-isoleucyl-5'-AMP. The 'KMSKS' region motif lies at 601-605 (KMSKS). An ATP-binding site is contributed by Lys-604. Cys-899, Cys-902, Cys-919, and Cys-922 together coordinate Zn(2+).

This sequence belongs to the class-I aminoacyl-tRNA synthetase family. IleS type 1 subfamily. Monomer. It depends on Zn(2+) as a cofactor.

The protein resides in the cytoplasm. It carries out the reaction tRNA(Ile) + L-isoleucine + ATP = L-isoleucyl-tRNA(Ile) + AMP + diphosphate. Functionally, catalyzes the attachment of isoleucine to tRNA(Ile). As IleRS can inadvertently accommodate and process structurally similar amino acids such as valine, to avoid such errors it has two additional distinct tRNA(Ile)-dependent editing activities. One activity is designated as 'pretransfer' editing and involves the hydrolysis of activated Val-AMP. The other activity is designated 'posttransfer' editing and involves deacylation of mischarged Val-tRNA(Ile). The sequence is that of Isoleucine--tRNA ligase from Proteus mirabilis (strain HI4320).